Consider the following 35-residue polypeptide: uncharacterized protein (35 aa).

A helical transmembrane segment spans residues 10–30 (LMITASFFAIFIIIVVSVLLL).

The protein resides in the membrane. This is an uncharacterized protein from Salmonella paratyphi A (strain ATCC 9150 / SARB42).